The following is a 408-amino-acid chain: Endo-1,4-beta-xylanase A (408 aa).

Positions 1–19 are cleaved as a signal peptide; the sequence is MKLSASFAALALLLPFVQA. The 36-residue stretch at 20 to 55 folds into the CBM1 domain; it reads QSPVWGQCGGIGWTGPTTCTAGNVCQEYSAYYSQCI. The interval 64–89 is disordered; sequence TSVSTAPNPPPTSHTSTSSAPSGAST. Residues 76–89 are compositionally biased toward low complexity; sequence SHTSTSSAPSGAST. The region spanning 88-405 is the GH10 domain; that stretch reads STSTAKLNTL…KPAYDGIAIG (318 aa). Glu222 (proton donor) is an active-site residue. Glu327 functions as the Nucleophile in the catalytic mechanism. A disulfide bridge connects residues Cys355 and Cys361.

The protein belongs to the glycosyl hydrolase 10 (cellulase F) family.

The protein localises to the secreted. It catalyses the reaction Endohydrolysis of (1-&gt;4)-beta-D-xylosidic linkages in xylans.. It participates in glycan degradation; xylan degradation. Functionally, endo-1,4-beta-xylanase involved in the hydrolysis of xylan, a major structural heterogeneous polysaccharide found in plant biomass representing the second most abundant polysaccharide in the biosphere, after cellulose. This is Endo-1,4-beta-xylanase A (xynA) from Phanerodontia chrysosporium (White-rot fungus).